The following is a 74-amino-acid chain: UPF0154 protein OB1676 (74 aa).

A helical transmembrane segment spans residues 4-24; sequence IWVVLIAIAALVAGVALGFFI.

The protein belongs to the UPF0154 family.

The protein resides in the membrane. This is UPF0154 protein OB1676 from Oceanobacillus iheyensis (strain DSM 14371 / CIP 107618 / JCM 11309 / KCTC 3954 / HTE831).